Reading from the N-terminus, the 33-residue chain is Mu-theraphotoxin-Osp1a (33 aa).

3 disulfide bridges follow: cysteine 2–cysteine 17, cysteine 9–cysteine 22, and cysteine 16–cysteine 29.

It belongs to the neurotoxin 10 (Hwtx-1) family. Expressed by the venom gland.

The protein localises to the secreted. Its function is as follows. Voltage-gated sodium channel Nav1.7/SCN9A inhibitor. This is Mu-theraphotoxin-Osp1a from Orphnaecus sp. (strain Sibaliw/Philippines) (Tarantula spider).